Reading from the N-terminus, the 84-residue chain is uncharacterized protein (84 aa).

This is an uncharacterized protein from Acidianus convivator (ATV).